A 172-amino-acid chain; its full sequence is Lipoprotein signal peptidase (172 aa).

Transmembrane regions (helical) follow at residues 10-30, 68-88, and 98-118; these read LIWLLLSVLVVGLDQWSKAWV, WQLWFFTALAVGISGLLAFWL, and SALPYALVIGGAIGNVIDRLM. Active-site residues include Asp124 and Asp142. Residues 138-158 traverse the membrane as a helical segment; sequence FNIADSAIVGGAIGIAVFGLF.

Belongs to the peptidase A8 family.

Its subcellular location is the cell inner membrane. The catalysed reaction is Release of signal peptides from bacterial membrane prolipoproteins. Hydrolyzes -Xaa-Yaa-Zaa-|-(S,diacylglyceryl)Cys-, in which Xaa is hydrophobic (preferably Leu), and Yaa (Ala or Ser) and Zaa (Gly or Ala) have small, neutral side chains.. It participates in protein modification; lipoprotein biosynthesis (signal peptide cleavage). This protein specifically catalyzes the removal of signal peptides from prolipoproteins. The sequence is that of Lipoprotein signal peptidase from Xanthomonas euvesicatoria pv. vesicatoria (strain 85-10) (Xanthomonas campestris pv. vesicatoria).